Consider the following 312-residue polypeptide: Protein atonal (312 aa).

Disordered regions lie at residues 136–174 and 220–248; these read SNVG…TAAA and NDGS…GKQI. Residues 162-174 show a composition bias toward low complexity; sequence PSTTATSTPTAAA. The 53-residue stretch at 255–307 folds into the bHLH domain; it reads KRRLAANARERRRMQNLNQAFDRLRQYLPCLGNDRQLSKHETLQMAQTYISAL.

In terms of assembly, efficient DNA binding requires dimerization with another bHLH protein. Forms a heterodimer with Daughterless. Proneural clusters and sense organ precursors of the chordotonal organs, optic furrow of the eye-antennal disk and developing brain lobe.

The protein localises to the nucleus. Its function is as follows. Developmental protein involved in neurogenesis. Required for the formation of chordotonal organs and photoreceptors. Seems to bind to E boxes. Specifically required for the photoreceptor R8 selection. This is Protein atonal (ato) from Drosophila melanogaster (Fruit fly).